The following is a 475-amino-acid chain: BICD family-like cargo adapter 2 (475 aa).

The stretch at 56-275 forms a coiled coil; it reads ELGKALLERN…LKELQDELHM (220 aa). Polar residues-rich tracts occupy residues 286–300 and 308–318; these read HSSL…TAVQ and SAETQSITSGY. The tract at residues 286–318 is disordered; the sequence is HSSLHSEIQQSTAVQNHEKGRNSAETQSITSGY. Residues 340 to 413 are a coiled coil; it reads RLQDQVTMQH…ESLNLQLLST (74 aa). Residues 440–450 are compositionally biased toward low complexity; it reads QSQKQQETQKP. The segment at 440–459 is disordered; the sequence is QSQKQQETQKPPESPQNSFL.

Belongs to the BICDR family.

The protein is BICD family-like cargo adapter 2 (bicdl2) of Xenopus tropicalis (Western clawed frog).